Consider the following 194-residue polypeptide: Phosphoheptose isomerase (194 aa).

Residues 37 to 194 (IADTFKAGGK…LIEKEMVAQG (158 aa)) form the SIS domain. 52 to 54 (NGG) is a binding site for substrate. Zn(2+) contacts are provided by His61 and Glu65. Substrate-binding positions include Glu65, 93–94 (ND), 119–121 (STS), Ser124, and Gln172. The Zn(2+) site is built by Gln172 and His180.

This sequence belongs to the SIS family. GmhA subfamily. Homotetramer. Zn(2+) is required as a cofactor.

It is found in the cytoplasm. It carries out the reaction 2 D-sedoheptulose 7-phosphate = D-glycero-alpha-D-manno-heptose 7-phosphate + D-glycero-beta-D-manno-heptose 7-phosphate. Its pathway is carbohydrate biosynthesis; D-glycero-D-manno-heptose 7-phosphate biosynthesis; D-glycero-alpha-D-manno-heptose 7-phosphate and D-glycero-beta-D-manno-heptose 7-phosphate from sedoheptulose 7-phosphate: step 1/1. Functionally, catalyzes the isomerization of sedoheptulose 7-phosphate in D-glycero-D-manno-heptose 7-phosphate. The polypeptide is Phosphoheptose isomerase (Sodalis glossinidius (strain morsitans)).